Here is a 644-residue protein sequence, read N- to C-terminus: Prolyl 3,4-dihydroxylase TPA1 (644 aa).

Residues 141–247 enclose the Fe2OG dioxygenase domain; it reads SKTDMSINTY…RLSIQGWYHI (107 aa). Fe cation-binding residues include histidine 159 and aspartate 161. Tyrosine 173 serves as a coordination point for 2-oxoglutarate. Residue histidine 227 coordinates Fe cation. Arginine 238 contributes to the 2-oxoglutarate binding site. Residue serine 607 is modified to Phosphoserine.

It belongs to the TPA1 family. As to quaternary structure, monomer and homodimer. Interacts with FRK1, eRF1 (SUP1), eRF3 (SUP35) and polyadenylate-binding protein PAB1. Interacts with ETT1. Requires Fe(2+) as cofactor. L-ascorbate serves as cofactor.

It localises to the nucleus. It catalyses the reaction [ribosomal protein uS12]-L-proline + 2-oxoglutarate + O2 = [ribosomal protein uS12]-(3S)-3-hydroxy-L-proline + succinate + CO2. The enzyme catalyses [ribosomal protein uS12]-(3S)-3-hydroxy-L-proline + 2-oxoglutarate + O2 = [ribosomal protein uS12]-(3S)-3,4-dihydroxy-L-proline + succinate + CO2. In terms of biological role, prolyl 3,4-dihydroxylase that catalyzes 3,4-dihydroxylation of 'Pro-64' of small ribosomal subunit uS12 (RPS23A and RPS23B), thereby regulating protein translation termination efficiency. Part of a messenger ribonucleoprotein (mRNP) complex at the 3'-UTR of mRNAs. It associates specifically with components of the translation termination complex and is involved in both translation termination and in regulation of normal mRNA decay through translation termination-coupled poly(A) shortening. This Saccharomyces cerevisiae (strain ATCC 204508 / S288c) (Baker's yeast) protein is Prolyl 3,4-dihydroxylase TPA1.